We begin with the raw amino-acid sequence, 339 residues long: MSEVYKQAGVDVEKGYEAVERLKKHVARTHRPEVLGGIGAFAGAFDLSSLQYKEPVLLSGTDGVGTKLKLAIDLDKHDTVGIDLVAMCVNDIIAQGGDPLFFLDYIACGENDPSRIEAIVSGIAEGCEQAGAALIGGETAEMPGMYDPDEYDLAGFVVGIVEKSAMITGKDIKSGDVVIGLSSSGIHSNGYSLVRKLIADVDLNQTYPGLSQTVKDAVMAPTKIYAKSIQALKKEVNLKGISHITGGGFDENIPRMLPDGLGVLIETNSWDIPEVFHFLEEKGNIDNREMYGVFNMGIGMAVVVAEEDVSIALQLLEKVDEQAYVIGKVTEEEGVHFTL.

The protein belongs to the AIR synthase family.

The protein resides in the cytoplasm. The catalysed reaction is 2-formamido-N(1)-(5-O-phospho-beta-D-ribosyl)acetamidine + ATP = 5-amino-1-(5-phospho-beta-D-ribosyl)imidazole + ADP + phosphate + H(+). Its pathway is purine metabolism; IMP biosynthesis via de novo pathway; 5-amino-1-(5-phospho-D-ribosyl)imidazole from N(2)-formyl-N(1)-(5-phospho-D-ribosyl)glycinamide: step 2/2. The protein is Phosphoribosylformylglycinamidine cyclo-ligase of Oceanobacillus iheyensis (strain DSM 14371 / CIP 107618 / JCM 11309 / KCTC 3954 / HTE831).